A 102-amino-acid chain; its full sequence is NADH-quinone oxidoreductase subunit K (102 aa).

A run of 3 helical transmembrane segments spans residues 6-26 (LGQG…GVLV), 30-50 (LLFM…AFIV), and 64-84 (FILV…LILL).

The protein belongs to the complex I subunit 4L family. NDH-1 is composed of 14 different subunits. Subunits NuoA, H, J, K, L, M, N constitute the membrane sector of the complex.

It localises to the cell inner membrane. It carries out the reaction a quinone + NADH + 5 H(+)(in) = a quinol + NAD(+) + 4 H(+)(out). In terms of biological role, NDH-1 shuttles electrons from NADH, via FMN and iron-sulfur (Fe-S) centers, to quinones in the respiratory chain. The immediate electron acceptor for the enzyme in this species is believed to be ubiquinone. Couples the redox reaction to proton translocation (for every two electrons transferred, four hydrogen ions are translocated across the cytoplasmic membrane), and thus conserves the redox energy in a proton gradient. The protein is NADH-quinone oxidoreductase subunit K of Acidiphilium cryptum (strain JF-5).